A 156-amino-acid chain; its full sequence is MKVIEGVLRLKGNEKIAVINGRFNHIITDRLVEGARDAFKRHGGNEDNLDLILVPGAFEIPFALEKALSSGKYDAVCCVGAVIRGATPHFDYISAEATKGIATVGLKYGKPVSNGVLTTDTIEQAIERAGSKVGNKGAEAMVTIIEMLDLYNEMGK.

5-amino-6-(D-ribitylamino)uracil contacts are provided by residues Phe23, 57 to 59 (AFE), and 81 to 83 (AVI). A (2S)-2-hydroxy-3-oxobutyl phosphate-binding site is contributed by 86 to 87 (AT). Catalysis depends on His89, which acts as the Proton donor. Asn114 contributes to the 5-amino-6-(D-ribitylamino)uracil binding site. Arg128 is a binding site for (2S)-2-hydroxy-3-oxobutyl phosphate.

Belongs to the DMRL synthase family.

The enzyme catalyses (2S)-2-hydroxy-3-oxobutyl phosphate + 5-amino-6-(D-ribitylamino)uracil = 6,7-dimethyl-8-(1-D-ribityl)lumazine + phosphate + 2 H2O + H(+). Its pathway is cofactor biosynthesis; riboflavin biosynthesis; riboflavin from 2-hydroxy-3-oxobutyl phosphate and 5-amino-6-(D-ribitylamino)uracil: step 1/2. Its function is as follows. Catalyzes the formation of 6,7-dimethyl-8-ribityllumazine by condensation of 5-amino-6-(D-ribitylamino)uracil with 3,4-dihydroxy-2-butanone 4-phosphate. This is the penultimate step in the biosynthesis of riboflavin. The chain is 6,7-dimethyl-8-ribityllumazine synthase from Aliarcobacter butzleri (strain RM4018) (Arcobacter butzleri).